The sequence spans 277 residues: MEIIRTVAEMRAWRKQAGKLAFVPTMGNLHEGHLKLVAAARERAEKVVVSIFVNRLQFGQGEDFDAYPRTFDADCAKLAAAGVDALFFPSERELYPRVRQDFNVEPPHIQNELCGAFRPGHFRGVATVVTKLFNIVQPDLACFGKKDYQQLHVIQAMIADLNSPIEIVPVDTGRAGDGLALSSRNGYLSAEERAEAPRLYRNLSMIRDGLMAGSQDYAALEQAARDDLAAAGWTVDYVEVRQADTLEIAHAGEKRLVVLAAARLGKTRLIDNIEVFR.

Met-26 to His-33 serves as a coordination point for ATP. The active-site Proton donor is His-33. Gln-57 serves as a coordination point for (R)-pantoate. Residue Gln-57 participates in beta-alanine binding. ATP is bound at residue Gly-144 to Asp-147. Gln-150 provides a ligand contact to (R)-pantoate. ATP contacts are provided by residues Gly-173 and Leu-181–Arg-184.

The protein belongs to the pantothenate synthetase family. Homodimer.

Its subcellular location is the cytoplasm. It carries out the reaction (R)-pantoate + beta-alanine + ATP = (R)-pantothenate + AMP + diphosphate + H(+). It participates in cofactor biosynthesis; (R)-pantothenate biosynthesis; (R)-pantothenate from (R)-pantoate and beta-alanine: step 1/1. In terms of biological role, catalyzes the condensation of pantoate with beta-alanine in an ATP-dependent reaction via a pantoyl-adenylate intermediate. This is Pantothenate synthetase from Chromobacterium violaceum (strain ATCC 12472 / DSM 30191 / JCM 1249 / CCUG 213 / NBRC 12614 / NCIMB 9131 / NCTC 9757 / MK).